We begin with the raw amino-acid sequence, 290 residues long: Carbonic anhydrase-related protein (290 aa).

Ser-5 bears the Phosphoserine mark. The Alpha-carbonic anhydrase domain occupies 27–289; the sequence is VEWGYEEGVE…LSDRVIRAAF (263 aa). The active-site Proton donor/acceptor is His-87. 2 residues coordinate Zn(2+): His-118 and His-141.

This sequence belongs to the alpha-carbonic anhydrase family.

Functionally, does not have a carbonic anhydrase catalytic activity. The polypeptide is Carbonic anhydrase-related protein (Ca8) (Rattus norvegicus (Rat)).